The following is a 315-amino-acid chain: Methionyl-tRNA formyltransferase (315 aa).

107–110 (SLLP) is a binding site for (6S)-5,6,7,8-tetrahydrofolate.

Belongs to the Fmt family.

It carries out the reaction L-methionyl-tRNA(fMet) + (6R)-10-formyltetrahydrofolate = N-formyl-L-methionyl-tRNA(fMet) + (6S)-5,6,7,8-tetrahydrofolate + H(+). In terms of biological role, attaches a formyl group to the free amino group of methionyl-tRNA(fMet). The formyl group appears to play a dual role in the initiator identity of N-formylmethionyl-tRNA by promoting its recognition by IF2 and preventing the misappropriation of this tRNA by the elongation apparatus. The chain is Methionyl-tRNA formyltransferase from Borrelia garinii subsp. bavariensis (strain ATCC BAA-2496 / DSM 23469 / PBi) (Borreliella bavariensis).